Reading from the N-terminus, the 354-residue chain is Hyaluronan and proteoglycan link protein 1 (354 aa).

The propeptide occupies 1-15 (MKSLLLLVLISICWA). N21 and N56 each carry an N-linked (GlcNAc...) asparagine glycan. The 115-residue stretch at 38–152 (PHLLVEAEQA…EGLEDDTVVV (115 aa)) folds into the Ig-like V-type domain. 5 cysteine pairs are disulfide-bonded: C61–C139, C181–C252, C205–C226, C279–C349, and C304–C325. Link domains lie at 159-254 (VVFP…FCFT) and 259-351 (GRFY…YCFR).

It belongs to the HAPLN family. As to expression, widely expressed. Weakly expressed in the brain.

The protein resides in the secreted. It localises to the extracellular space. It is found in the extracellular matrix. In terms of biological role, stabilizes the aggregates of proteoglycan monomers with hyaluronic acid in the extracellular cartilage matrix. The protein is Hyaluronan and proteoglycan link protein 1 (HAPLN1) of Homo sapiens (Human).